The following is a 618-amino-acid chain: Probable Xaa-Pro aminopeptidase P (618 aa).

The Mn(2+) site is built by D414, D425, E523, and E537.

The protein belongs to the peptidase M24B family. Mn(2+) is required as a cofactor.

It catalyses the reaction Release of any N-terminal amino acid, including proline, that is linked to proline, even from a dipeptide or tripeptide.. Functionally, catalyzes the removal of a penultimate prolyl residue from the N-termini of peptides. This chain is Probable Xaa-Pro aminopeptidase P (AMPP), found in Metarhizium robertsii (strain ARSEF 23 / ATCC MYA-3075) (Metarhizium anisopliae (strain ARSEF 23)).